We begin with the raw amino-acid sequence, 475 residues long: Putative response regulator NtrX-like (475 aa).

Residues 5-121 enclose the Response regulatory domain; sequence DVLILDDEES…KLIILLKRAC (117 aa). Asp54 bears the 4-aspartylphosphate mark. One can recognise a Sigma-54 factor interaction domain in the interval 143–369; it reads LVGGCSVTLK…LRNVVEWTLI (227 aa). ATP-binding positions include 171–178 and 232–241; these read GKVGSGKE and ANNGTLYIDE.

Functionally, member of the two-component regulatory system RT0550/RT0603. This chain is Putative response regulator NtrX-like, found in Rickettsia typhi (strain ATCC VR-144 / Wilmington).